Reading from the N-terminus, the 806-residue chain is Centrosomal protein of 85 kDa-like (806 aa).

Disordered regions lie at residues 1–27 (MWGRFLAPEAGGRDSPSGARSFPAGSD), 51–89 (NNHLRRHSITSDSGDTGIGTSCSDSVEDHSTSSGTLSFK), and 101–146 (HVMP…SSLD). Ser-15 is modified (phosphoserine). Over residues 60–74 (TSDSGDTGIGTSCSD) the composition is skewed to polar residues. The segment covering 135–146 (DHSRGERDSSLD) has biased composition (basic and acidic residues). Ser-207 is subject to Phosphoserine. The interval 308–353 (PLEGRTTDDSYSLAPWQQPQTEEFQQGSETPMQVLTGSSRQSYSPP) is disordered. Over residues 322 to 351 (PWQQPQTEEFQQGSETPMQVLTGSSRQSYS) the composition is skewed to polar residues. Residues 442–644 (QEELEQKLAS…ILEIQSMQGK (203 aa)) adopt a coiled-coil conformation.

It belongs to the CEP85 family.

The protein resides in the cytoplasm. The protein localises to the cytoskeleton. It localises to the microtubule organizing center. Its subcellular location is the centrosome. In terms of biological role, plays an essential role in neuronal cell migration. This Mus musculus (Mouse) protein is Centrosomal protein of 85 kDa-like.